The following is a 222-amino-acid chain: uncharacterized protein (222 aa).

The next 7 helical transmembrane spans lie at Y26–M46, L48–V68, W75–L95, V107–L127, F139–I159, I166–I186, and I198–A218.

Belongs to the BI1 family.

It is found in the cell membrane. This is an uncharacterized protein from Pseudomonas aeruginosa (strain ATCC 15692 / DSM 22644 / CIP 104116 / JCM 14847 / LMG 12228 / 1C / PRS 101 / PAO1).